The primary structure comprises 351 residues: Adenine deaminase (351 aa).

Residues His-20, His-22, and His-200 each coordinate Zn(2+). The Proton donor role is filled by Glu-203. Residue Asp-281 coordinates Zn(2+). Asp-282 contributes to the substrate binding site.

The protein belongs to the metallo-dependent hydrolases superfamily. Adenosine and AMP deaminases family. Adenine deaminase type 2 subfamily. Zn(2+) serves as cofactor.

The enzyme catalyses adenine + H2O + H(+) = hypoxanthine + NH4(+). Its function is as follows. Catalyzes the hydrolytic deamination of adenine to hypoxanthine. Plays an important role in the purine salvage pathway and in nitrogen catabolism. The sequence is that of Adenine deaminase from Cupriavidus necator (strain ATCC 17699 / DSM 428 / KCTC 22496 / NCIMB 10442 / H16 / Stanier 337) (Ralstonia eutropha).